The sequence spans 232 residues: 2,3,4,5-tetrahydropyridine-2,6-dicarboxylate N-acetyltransferase (232 aa).

This sequence belongs to the transferase hexapeptide repeat family. DapH subfamily.

It carries out the reaction (S)-2,3,4,5-tetrahydrodipicolinate + acetyl-CoA + H2O = L-2-acetamido-6-oxoheptanedioate + CoA. The protein operates within amino-acid biosynthesis; L-lysine biosynthesis via DAP pathway; LL-2,6-diaminopimelate from (S)-tetrahydrodipicolinate (acetylase route): step 1/3. Catalyzes the transfer of an acetyl group from acetyl-CoA to tetrahydrodipicolinate. In Streptococcus suis (strain 98HAH33), this protein is 2,3,4,5-tetrahydropyridine-2,6-dicarboxylate N-acetyltransferase.